We begin with the raw amino-acid sequence, 355 residues long: MSAASREERSGPPGSFAKRVLVTGGAGFIASHVIVSLVEDYPDYMIVNLDKLDYCASLKNLEPVSNKQNYKFIQGDICDSHFVKLLFEVEKIDIVLHFAAQTHVDLSFVRAFEFTYVNVYGTHVLVNAAYEAGVEKFIYVSTDEVYGGSLDQEFDESSPKQPTNPYASSKAAAECFVQSYWERYKFPVVITRSSNVYGPHQYPEKVIPKFISLLQHNRKCCIHGSGLQRRNFLYAADVVEAFLTVLTKGEPGEIYNIGTNFEMSVVQLAKELIQLIKETNSESETESWVDYVSDRPHNDMRYPMKSEKIHSLGWKPKVPWEEGIKKTVEWYRKNFHNWKNAEKALEPFPVQPPFM.

Thr-142 is a binding site for substrate. The active-site Proton donor is Asp-143. Residues Glu-144 and Tyr-166 each act as proton acceptor in the active site.

The protein belongs to the NAD(P)-dependent epimerase/dehydratase family. dTDP-glucose dehydratase subfamily. Requires NAD(+) as cofactor.

It catalyses the reaction dTDP-alpha-D-glucose = dTDP-4-dehydro-6-deoxy-alpha-D-glucose + H2O. This chain is dTDP-D-glucose 4,6-dehydratase (Tgds), found in Mus musculus (Mouse).